Consider the following 232-residue polypeptide: Ubiquinone biosynthesis O-methyltransferase (232 aa).

Residues Arg36, Gly55, Asp76, and Leu120 each coordinate S-adenosyl-L-methionine.

The protein belongs to the methyltransferase superfamily. UbiG/COQ3 family.

The enzyme catalyses a 3-demethylubiquinol + S-adenosyl-L-methionine = a ubiquinol + S-adenosyl-L-homocysteine + H(+). It catalyses the reaction a 3-(all-trans-polyprenyl)benzene-1,2-diol + S-adenosyl-L-methionine = a 2-methoxy-6-(all-trans-polyprenyl)phenol + S-adenosyl-L-homocysteine + H(+). It participates in cofactor biosynthesis; ubiquinone biosynthesis. In terms of biological role, O-methyltransferase that catalyzes the 2 O-methylation steps in the ubiquinone biosynthetic pathway. The sequence is that of Ubiquinone biosynthesis O-methyltransferase from Stutzerimonas stutzeri (strain A1501) (Pseudomonas stutzeri).